The chain runs to 342 residues: Ribosomal RNA small subunit methyltransferase C (342 aa).

This sequence belongs to the methyltransferase superfamily. RsmC family. As to quaternary structure, monomer.

It is found in the cytoplasm. The enzyme catalyses guanosine(1207) in 16S rRNA + S-adenosyl-L-methionine = N(2)-methylguanosine(1207) in 16S rRNA + S-adenosyl-L-homocysteine + H(+). Specifically methylates the guanine in position 1207 of 16S rRNA in the 30S particle. The polypeptide is Ribosomal RNA small subunit methyltransferase C (Hahella chejuensis (strain KCTC 2396)).